The sequence spans 342 residues: L-threonine 3-dehydrogenase (342 aa).

C38 contributes to the Zn(2+) binding site. Catalysis depends on charge relay system residues T40 and H43. Zn(2+) contacts are provided by H63, E64, C93, C96, C99, and C107. Residues I175, D195, R200, 262 to 264 (LGI), and 286 to 287 (IY) contribute to the NAD(+) site.

It belongs to the zinc-containing alcohol dehydrogenase family. In terms of assembly, homotetramer. Requires Zn(2+) as cofactor.

The protein localises to the cytoplasm. The catalysed reaction is L-threonine + NAD(+) = (2S)-2-amino-3-oxobutanoate + NADH + H(+). It participates in amino-acid degradation; L-threonine degradation via oxydo-reductase pathway; glycine from L-threonine: step 1/2. In terms of biological role, catalyzes the NAD(+)-dependent oxidation of L-threonine to 2-amino-3-ketobutyrate. The sequence is that of L-threonine 3-dehydrogenase from Burkholderia ambifaria (strain ATCC BAA-244 / DSM 16087 / CCUG 44356 / LMG 19182 / AMMD) (Burkholderia cepacia (strain AMMD)).